The chain runs to 234 residues: CHD1 helical C-terminal domain containing protein 1 (234 aa).

Residues 1–38 (MEASDGQADEREEPLEQGTNARSLERRSSTTPAKDSLV) are disordered. Positions 44-145 (LDRDTFKICK…NNQTTKFLMA (102 aa)) are CHD1 helical C-terminal domain (CHCT). Residues 200–234 (LRARGPRRRGSKLPQEPKLKRRRIKEAPDTPETCL) are disordered.

The protein localises to the cytoplasm. It localises to the nucleus. In terms of biological role, may play a role in regulation of apoptosis. This chain is CHD1 helical C-terminal domain containing protein 1 (CHCT1), found in Bos taurus (Bovine).